Here is a 270-residue protein sequence, read N- to C-terminus: 3-methyl-2-oxobutanoate hydroxymethyltransferase (270 aa).

The Mg(2+) site is built by D48 and D87. Residues 48-49 (DS), D87, and K117 each bind 3-methyl-2-oxobutanoate. E119 lines the Mg(2+) pocket. The active-site Proton acceptor is E186.

It belongs to the PanB family. As to quaternary structure, homodecamer; pentamer of dimers. The cofactor is Mg(2+).

The protein resides in the cytoplasm. It catalyses the reaction 3-methyl-2-oxobutanoate + (6R)-5,10-methylene-5,6,7,8-tetrahydrofolate + H2O = 2-dehydropantoate + (6S)-5,6,7,8-tetrahydrofolate. The protein operates within cofactor biosynthesis; (R)-pantothenate biosynthesis; (R)-pantoate from 3-methyl-2-oxobutanoate: step 1/2. Its function is as follows. Catalyzes the reversible reaction in which hydroxymethyl group from 5,10-methylenetetrahydrofolate is transferred onto alpha-ketoisovalerate to form ketopantoate. The sequence is that of 3-methyl-2-oxobutanoate hydroxymethyltransferase from Synechococcus sp. (strain RCC307).